The sequence spans 271 residues: ATP synthase subunit delta (271 aa).

It belongs to the ATPase delta chain family. F-type ATPases have 2 components, F(1) - the catalytic core - and F(0) - the membrane proton channel. F(1) has five subunits: alpha(3), beta(3), gamma(1), delta(1), epsilon(1). F(0) has three main subunits: a(1), b(2) and c(10-14). The alpha and beta chains form an alternating ring which encloses part of the gamma chain. F(1) is attached to F(0) by a central stalk formed by the gamma and epsilon chains, while a peripheral stalk is formed by the delta and b chains.

Its subcellular location is the cell membrane. Functionally, f(1)F(0) ATP synthase produces ATP from ADP in the presence of a proton or sodium gradient. F-type ATPases consist of two structural domains, F(1) containing the extramembraneous catalytic core and F(0) containing the membrane proton channel, linked together by a central stalk and a peripheral stalk. During catalysis, ATP synthesis in the catalytic domain of F(1) is coupled via a rotary mechanism of the central stalk subunits to proton translocation. In terms of biological role, this protein is part of the stalk that links CF(0) to CF(1). It either transmits conformational changes from CF(0) to CF(1) or is implicated in proton conduction. This is ATP synthase subunit delta from Renibacterium salmoninarum (strain ATCC 33209 / DSM 20767 / JCM 11484 / NBRC 15589 / NCIMB 2235).